A 476-amino-acid chain; its full sequence is Serine/threonine-protein kinase PknF (476 aa).

The 268-residue stretch at 12 to 279 (FTIVRQLGSG…FARALGHRLG (268 aa)) folds into the Protein kinase domain. ATP contacts are provided by residues 18–26 (LGSGGMGEV) and lysine 41. Aspartate 137 serves as the catalytic Proton acceptor. A helical membrane pass occupies residues 306–326 (TAVIVPAVLAMLLVMAVAVAV). A disordered region spans residues 332 to 376 (ADDERAAQPARTRTTTSAGTTTSVAPASTTRPAPTTPTTTGAADT). Positions 338 to 376 (AQPARTRTTTSAGTTTSVAPASTTRPAPTTPTTTGAADT) are enriched in low complexity.

The protein belongs to the protein kinase superfamily. Ser/Thr protein kinase family. In terms of processing, autophosphorylated. Dephosphorylated by PstP.

Its subcellular location is the cell membrane. The catalysed reaction is L-seryl-[protein] + ATP = O-phospho-L-seryl-[protein] + ADP + H(+). It carries out the reaction L-threonyl-[protein] + ATP = O-phospho-L-threonyl-[protein] + ADP + H(+). In terms of biological role, a serine/threonine-protein kinase, acts on HupB in vitro. This chain is Serine/threonine-protein kinase PknF, found in Mycobacterium tuberculosis (strain ATCC 25177 / H37Ra).